Reading from the N-terminus, the 199-residue chain is Superoxide dismutase [Mn/Fe] (199 aa).

Fe(3+)-binding residues include His-27, His-81, Asp-161, and His-165. His-27, His-81, Asp-161, and His-165 together coordinate Mn(2+).

This sequence belongs to the iron/manganese superoxide dismutase family. Homodimer. It depends on Mn(2+) as a cofactor. Requires Fe(3+) as cofactor.

It catalyses the reaction 2 superoxide + 2 H(+) = H2O2 + O2. Its function is as follows. Destroys superoxide anion radicals which are normally produced within the cells and which are toxic to biological systems. Catalyzes the dismutation of superoxide anion radicals into O2 and H2O2 by successive reduction and oxidation of the transition metal ion at the active site. In Staphylococcus saprophyticus subsp. saprophyticus (strain ATCC 15305 / DSM 20229 / NCIMB 8711 / NCTC 7292 / S-41), this protein is Superoxide dismutase [Mn/Fe] (sodA).